Consider the following 413-residue polypeptide: Peptidase T (413 aa).

His-81 is a binding site for Zn(2+). Residue Asp-83 is part of the active site. Asp-143 provides a ligand contact to Zn(2+). Catalysis depends on Glu-178, which acts as the Proton acceptor. Positions 179, 201, and 383 each coordinate Zn(2+).

Belongs to the peptidase M20B family. Zn(2+) is required as a cofactor.

The protein resides in the cytoplasm. It carries out the reaction Release of the N-terminal residue from a tripeptide.. Functionally, cleaves the N-terminal amino acid of tripeptides. This Lactococcus lactis subsp. cremoris (Streptococcus cremoris) protein is Peptidase T.